A 586-amino-acid polypeptide reads, in one-letter code: 2-succinyl-5-enolpyruvyl-6-hydroxy-3-cyclohexene-1-carboxylate synthase (586 aa).

The protein belongs to the TPP enzyme family. MenD subfamily. As to quaternary structure, homodimer. It depends on Mg(2+) as a cofactor. Mn(2+) is required as a cofactor. The cofactor is thiamine diphosphate.

The enzyme catalyses isochorismate + 2-oxoglutarate + H(+) = 5-enolpyruvoyl-6-hydroxy-2-succinyl-cyclohex-3-ene-1-carboxylate + CO2. Its pathway is quinol/quinone metabolism; 1,4-dihydroxy-2-naphthoate biosynthesis; 1,4-dihydroxy-2-naphthoate from chorismate: step 2/7. It functions in the pathway quinol/quinone metabolism; menaquinone biosynthesis. Its function is as follows. Catalyzes the thiamine diphosphate-dependent decarboxylation of 2-oxoglutarate and the subsequent addition of the resulting succinic semialdehyde-thiamine pyrophosphate anion to isochorismate to yield 2-succinyl-5-enolpyruvyl-6-hydroxy-3-cyclohexene-1-carboxylate (SEPHCHC). The sequence is that of 2-succinyl-5-enolpyruvyl-6-hydroxy-3-cyclohexene-1-carboxylate synthase from Natronomonas pharaonis (strain ATCC 35678 / DSM 2160 / CIP 103997 / JCM 8858 / NBRC 14720 / NCIMB 2260 / Gabara) (Halobacterium pharaonis).